The primary structure comprises 373 residues: MHRGTQEGAMASRLLHRLRHALAGDGPGEAAASPEAEQFPESSELEDDDAEGLSSRLSGTLSFTSAEDDEDDEDEDDEEAGPDQLPLGDGTSGEDAERSPPPDGQWGSQLLARQLQDFWKKSRNTLAPQRLLFEVTSANVVKDPPSKYVLYTLAVIGPGPPDCQPAQISRRYSDFERLHRNLQRQFRGPMAAISFPRKRLRRNFTAETIARRSRAFEQFLGHLQAVPELRHAPDLQDFFVLPELRRAQSLTCTGLYREALALWANAWQLQAQLGTPSGPDRPLLTLAGLAVCHQELEDPGEARACCEKALQLLGDKSLHPLLAPFLEAHVRLSWRLGLDKRQSEARLQALQEAGLTPTPPPSLKELLIKEVLD.

The segment at 1–107 is disordered; that stretch reads MHRGTQEGAM…RSPPPDGQWG (107 aa). A compositionally biased stretch (low complexity) spans 21–37; that stretch reads ALAGDGPGEAAASPEAE. A compositionally biased stretch (polar residues) spans 55–65; the sequence is SRLSGTLSFTS. The segment covering 66 to 81 has biased composition (acidic residues); sequence AEDDEDDEDEDDEEAG. Residues 129-246 form the PX domain; the sequence is QRLLFEVTSA…DFFVLPELRR (118 aa). The a 1,2-diacyl-sn-glycero-3-phospho-(1D-myo-inositol-3-phosphate) site is built by Arg171, Ser173, Lys198, and Arg212.

The protein belongs to the sorting nexin family. Monomer. As to expression, highly expressed in fetus liver, but only weakly expressed in brain, skeleton muscle, smooth muscle, and cardiac muscle, kidney, and adrenal gland.

Its subcellular location is the cytoplasmic vesicle membrane. It is found in the early endosome membrane. Its function is as follows. Binds to membranes enriched in phosphatidylinositol 3-phosphate (PtdIns(P3)) and phosphatidylinositol 4,5-bisphosphate. May be involved in several stages of intracellular trafficking. The protein is Sorting nexin-21 (SNX21) of Homo sapiens (Human).